The sequence spans 124 residues: FK506-binding protein 1 (124 aa).

The region spanning 23–122 (GDTVTIHYDG…VFEVELLGVN (100 aa)) is the PPIase FKBP-type domain.

This sequence belongs to the FKBP-type PPIase family. FKBP1 subfamily.

The protein localises to the cytoplasm. It carries out the reaction [protein]-peptidylproline (omega=180) = [protein]-peptidylproline (omega=0). Inhibited by rapamycin. In terms of biological role, PPIases accelerate the folding of proteins. It catalyzes the cis-trans isomerization of proline imidic peptide bonds in oligopeptides. In Candida albicans (strain SC5314 / ATCC MYA-2876) (Yeast), this protein is FK506-binding protein 1 (RBP1).